We begin with the raw amino-acid sequence, 344 residues long: Arginine N-succinyltransferase (344 aa).

Residue L125 participates in succinyl-CoA binding. H229 acts as the Proton donor in catalysis.

It belongs to the arginine N-succinyltransferase family.

The enzyme catalyses succinyl-CoA + L-arginine = N(2)-succinyl-L-arginine + CoA + H(+). It functions in the pathway amino-acid degradation; L-arginine degradation via AST pathway; L-glutamate and succinate from L-arginine: step 1/5. Catalyzes the transfer of succinyl-CoA to arginine to produce N(2)-succinylarginine. The protein is Arginine N-succinyltransferase of Shigella flexneri serotype 5b (strain 8401).